We begin with the raw amino-acid sequence, 227 residues long: uncharacterized protein (227 aa).

The RCK N-terminal domain maps to 3–119 (RADFCIIGLG…STMGIREALI (117 aa)). Residues 134-221 (HGLENEIINL…LNKYLNYINP (88 aa)) enclose the RCK C-terminal domain.

This is an uncharacterized protein from Mycoplasma genitalium (strain ATCC 33530 / DSM 19775 / NCTC 10195 / G37) (Mycoplasmoides genitalium).